The following is a 576-amino-acid chain: Ferroportin (576 aa).

Residues 1-23 lie on the Cytoplasmic side of the membrane; that stretch reads MPKAGEQARQGGCCGSLANYLTS. Residues 24–53 form a helical membrane-spanning segment; that stretch reads AKFLLYLGHSLSTWGDRMWHFAVSVFLVEL. Fe cation-binding residues include Asp-39 and His-43. The Extracellular segment spans residues 54-57; sequence YGNS. A helical membrane pass occupies residues 58 to 84; the sequence is LLLTAVYGLVVAGSVLVLGAIIGDWVD. Over 85–87 the chain is Cytoplasmic; the sequence is KNA. Residues 88-118 traverse the membrane as a helical segment; that stretch reads RLKVAQTSLVVQNVSVILCGIILMMVFLHKN. The Extracellular portion of the chain corresponds to 119–126; it reads ELLTMYHG. Residues 127-162 form a helical membrane-spanning segment; it reads WVLTFCYILIITIADVANLASTATAITIQRDWIVVV. Residues 163–164 are Cytoplasmic-facing; that stretch reads AG. The helical transmembrane segment at 165-195 threads the bilayer; it reads GDRSKLADMNATIRRIDQLTNILAPMAVGQI. Topologically, residues 196 to 202 are extracellular; the sequence is MTFGSAV. Residues 203–229 form a helical membrane-spanning segment; that stretch reads IGCGFISGWNLVSMCVEYFLLWKVYQK. Residues 230-306 lie on the Cytoplasmic side of the membrane; sequence TPALAVKAAL…DGWVSYYNQS (77 aa). The helical transmembrane segment at 307-333 threads the bilayer; the sequence is VFLAGMGLAFLYMTVLGFDCITTGYAY. Cys-326 is a binding site for Fe cation. Topologically, residues 334 to 338 are extracellular; it reads TQGLS. Residues 339-366 traverse the membrane as a helical segment; sequence GSILSILMGASAITGIMGTVAFTWLRRK. At 367–368 the chain is on the cytoplasmic side; that stretch reads CG. Residues 369-391 traverse the membrane as a helical segment; that stretch reads LVRTGLISGFAQLSCLILCVISV. Residues 392 to 458 are Extracellular-facing; sequence FMPGSPLDLS…ETTPKSVPII (67 aa). N-linked (GlcNAc...) asparagine glycosylation occurs at Asn-439. The chain crosses the membrane as a helical span at residues 459–488; that stretch reads SVSLLFAGVIAARIGLWSFDLTVTQLLQEN. Residues 489-493 are Cytoplasmic-facing; sequence VIESE. The chain crosses the membrane as a helical span at residues 494-518; the sequence is RGIINGVQNSMNYLLDLLHFIMVIL. Residue His-512 participates in Fe cation binding. The Extracellular portion of the chain corresponds to 519 to 521; it reads APN. The chain crosses the membrane as a helical span at residues 522–547; sequence PEAFGLLVLISVSFVAMGHIMYFRFA. Residues 548 to 576 lie on the Cytoplasmic side of the membrane; that stretch reads QKTLGSKLFACGADDEEVTNENQANTSVV.

Belongs to the ferroportin (FP) (TC 2.A.100) family. SLC40A subfamily. Identified in a complex with STOM. Interacts with HAMP; affinity of the peptide hormone HAMP for SLC40A1 increases by 80-fold in the presence of iron and the interaction promotes SLC40A1 ubiquitination and degradation. Part of a complex composed of SLC40A1/ferroportin, TF/transferrin and HEPH/hephaestin that transfers iron from cells to transferrin. In terms of processing, polyubiquitinated by RNF217; leading to proteasomal degradation. Under conditions of high systemic iron levels, both the hormone peptide hepcidin/HAMP and holo(iron bound)-transferrin/TF induce the ubiquitination, internalization and proteasomal degradation of SLC40A1 to control iron release from cells.

The protein localises to the cell membrane. It localises to the basolateral cell membrane. The catalysed reaction is Fe(2+)(in) = Fe(2+)(out). Its activity is regulated as follows. During elevated serum iron levels, liver-derived hepcidin/HAMP negatively regulates cell surface ferroportin/SLC40A1 by inducing its ubiquitination, internalization, and degradation. Indeed, hepcidin/HAMP affinity towards ferroportin/SLC40A1 increases by 80-fold in the presence of iron. In terms of biological role, transports Fe(2+) from the inside of a cell to the outside of the cell, playing a key role for maintaining systemic iron homeostasis. Transports iron from intestinal, splenic, hepatic cells, macrophages and erythrocytes into the blood to provide iron to other tissues. Controls therefore dietary iron uptake, iron recycling by macrophages and erythrocytes, and release of iron stores in hepatocytes. When iron is in excess in serum, circulating HAMP/hepcidin levels increase resulting in a degradation of SLC40A1, thus limiting the iron efflux to plasma. The chain is Ferroportin from Canis lupus familiaris (Dog).